A 563-amino-acid polypeptide reads, in one-letter code: Protein NOXP20 (563 aa).

Positions 1–84 are disordered; that stretch reads MSDDAGDTLA…ANALEPPLNG (84 aa). A compositionally biased stretch (low complexity) spans 56 to 68; it reads AAVQGAGAAAIGP. S120 bears the Phosphoserine mark. The tract at residues 165–206 is disordered; it reads VNSGSSEGAQPNTENGVPEITDAATDQGPAESPPTSPSSASR. Polar residues predominate over residues 166–179; it reads NSGSSEGAQPNTEN. Phosphothreonine is present on residues T185 and T189. S196 carries the post-translational modification Phosphoserine. T199 is modified (phosphothreonine). 2 positions are modified to phosphoserine: S202 and S261. A coiled-coil region spans residues 343–367; the sequence is AAKELENEENQEEQGLEEKGEEFAR. Residues 411-436 form a disordered region; it reads SEEETKKEEKEEKSQDPQEDKKEEKK.

It belongs to the FAM114 family.

The protein localises to the cytoplasm. Its function is as follows. May play a role in neuronal cell development. In Homo sapiens (Human), this protein is Protein NOXP20 (FAM114A1).